A 144-amino-acid polypeptide reads, in one-letter code: Large ribosomal subunit protein uL16 (144 aa).

Residues 1 to 16 (MLIPKRVKYRKQHRGR) show a composition bias toward basic residues. The tract at residues 1–23 (MLIPKRVKYRKQHRGRPGGGMAK) is disordered.

Belongs to the universal ribosomal protein uL16 family. Part of the 50S ribosomal subunit.

Functionally, binds 23S rRNA and is also seen to make contacts with the A and possibly P site tRNAs. In Pelotomaculum thermopropionicum (strain DSM 13744 / JCM 10971 / SI), this protein is Large ribosomal subunit protein uL16.